The following is a 481-amino-acid chain: Probable glycine dehydrogenase (decarboxylating) subunit 2 (481 aa).

Positions Met1 to Val23 are disordered. An N6-(pyridoxal phosphate)lysine modification is found at Lys263.

It belongs to the GcvP family. C-terminal subunit subfamily. As to quaternary structure, the glycine cleavage system is composed of four proteins: P, T, L and H. In this organism, the P 'protein' is a heterodimer of two subunits. It depends on pyridoxal 5'-phosphate as a cofactor.

It catalyses the reaction N(6)-[(R)-lipoyl]-L-lysyl-[glycine-cleavage complex H protein] + glycine + H(+) = N(6)-[(R)-S(8)-aminomethyldihydrolipoyl]-L-lysyl-[glycine-cleavage complex H protein] + CO2. Functionally, the glycine cleavage system catalyzes the degradation of glycine. The P protein binds the alpha-amino group of glycine through its pyridoxal phosphate cofactor; CO(2) is released and the remaining methylamine moiety is then transferred to the lipoamide cofactor of the H protein. This is Probable glycine dehydrogenase (decarboxylating) subunit 2 from Francisella philomiragia subsp. philomiragia (strain ATCC 25017 / CCUG 19701 / FSC 153 / O#319-036).